A 244-amino-acid chain; its full sequence is Small ribosomal subunit protein uS2m (244 aa).

Belongs to the universal ribosomal protein uS2 family.

It localises to the mitochondrion. This Dictyostelium discoideum (Social amoeba) protein is Small ribosomal subunit protein uS2m (mrps2).